We begin with the raw amino-acid sequence, 347 residues long: NADH-ubiquinone oxidoreductase chain 2 (347 aa).

11 helical membrane-spanning segments follow: residues 3-23 (PLIF…VMMS), 25-45 (HWLM…PLLM), 59-79 (YFLT…INLL), 96-116 (IIMT…FWVP), 122-144 (ISLS…VLYV), 149-171 (INLD…GGLN), 178-198 (ILAY…VFNP), 202-222 (LLNL…FMVA), 247-267 (IMLS…WMII), 276-296 (ITLA…YMRL), and 326-346 (LPVL…ITLL).

This sequence belongs to the complex I subunit 2 family. In terms of assembly, core subunit of respiratory chain NADH dehydrogenase (Complex I) which is composed of 45 different subunits. Interacts with TMEM242.

The protein resides in the mitochondrion inner membrane. It catalyses the reaction a ubiquinone + NADH + 5 H(+)(in) = a ubiquinol + NAD(+) + 4 H(+)(out). Its function is as follows. Core subunit of the mitochondrial membrane respiratory chain NADH dehydrogenase (Complex I) which catalyzes electron transfer from NADH through the respiratory chain, using ubiquinone as an electron acceptor. Essential for the catalytic activity and assembly of complex I. The sequence is that of NADH-ubiquinone oxidoreductase chain 2 from Saccopteryx bilineata (Greater white-lined bat).